A 310-amino-acid polypeptide reads, in one-letter code: Aspartate carbamoyltransferase catalytic subunit (310 aa).

Residues R58 and T59 each contribute to the carbamoyl phosphate site. Residue K87 coordinates L-aspartate. Residues R108, H136, and Q139 each contribute to the carbamoyl phosphate site. R169 and R229 together coordinate L-aspartate. 2 residues coordinate carbamoyl phosphate: L268 and P269.

This sequence belongs to the aspartate/ornithine carbamoyltransferase superfamily. ATCase family. In terms of assembly, heterododecamer (2C3:3R2) of six catalytic PyrB chains organized as two trimers (C3), and six regulatory PyrI chains organized as three dimers (R2).

It catalyses the reaction carbamoyl phosphate + L-aspartate = N-carbamoyl-L-aspartate + phosphate + H(+). Its pathway is pyrimidine metabolism; UMP biosynthesis via de novo pathway; (S)-dihydroorotate from bicarbonate: step 2/3. In terms of biological role, catalyzes the condensation of carbamoyl phosphate and aspartate to form carbamoyl aspartate and inorganic phosphate, the committed step in the de novo pyrimidine nucleotide biosynthesis pathway. The protein is Aspartate carbamoyltransferase catalytic subunit of Leptospira biflexa serovar Patoc (strain Patoc 1 / Ames).